Here is a 118-residue protein sequence, read N- to C-terminus: Aspartate 1-decarboxylase (118 aa).

Serine 25 acts as the Schiff-base intermediate with substrate; via pyruvic acid in catalysis. Serine 25 is subject to Pyruvic acid (Ser). Residue threonine 57 coordinates substrate. Residue tyrosine 58 is the Proton donor of the active site. 73 to 75 contacts substrate; the sequence is GAA.

This sequence belongs to the PanD family. Heterooctamer of four alpha and four beta subunits. It depends on pyruvate as a cofactor. Is synthesized initially as an inactive proenzyme, which is activated by self-cleavage at a specific serine bond to produce a beta-subunit with a hydroxyl group at its C-terminus and an alpha-subunit with a pyruvoyl group at its N-terminus.

It is found in the cytoplasm. The enzyme catalyses L-aspartate + H(+) = beta-alanine + CO2. The protein operates within cofactor biosynthesis; (R)-pantothenate biosynthesis; beta-alanine from L-aspartate: step 1/1. In terms of biological role, catalyzes the pyruvoyl-dependent decarboxylation of aspartate to produce beta-alanine. This Caulobacter vibrioides (strain ATCC 19089 / CIP 103742 / CB 15) (Caulobacter crescentus) protein is Aspartate 1-decarboxylase.